Consider the following 278-residue polypeptide: 4-hydroxy-tetrahydrodipicolinate reductase (278 aa).

NAD(+)-binding positions include 13-18 (GAAGKM) and 111-113 (GTT). The Proton donor/acceptor role is filled by H167. H168 is a binding site for (S)-2,3,4,5-tetrahydrodipicolinate. Catalysis depends on K171, which acts as the Proton donor. 177 to 178 (GT) serves as a coordination point for (S)-2,3,4,5-tetrahydrodipicolinate.

Belongs to the DapB family.

It localises to the cytoplasm. The catalysed reaction is (S)-2,3,4,5-tetrahydrodipicolinate + NAD(+) + H2O = (2S,4S)-4-hydroxy-2,3,4,5-tetrahydrodipicolinate + NADH + H(+). It catalyses the reaction (S)-2,3,4,5-tetrahydrodipicolinate + NADP(+) + H2O = (2S,4S)-4-hydroxy-2,3,4,5-tetrahydrodipicolinate + NADPH + H(+). It participates in amino-acid biosynthesis; L-lysine biosynthesis via DAP pathway; (S)-tetrahydrodipicolinate from L-aspartate: step 4/4. Catalyzes the conversion of 4-hydroxy-tetrahydrodipicolinate (HTPA) to tetrahydrodipicolinate. This is 4-hydroxy-tetrahydrodipicolinate reductase from Trichormus variabilis (strain ATCC 29413 / PCC 7937) (Anabaena variabilis).